The following is a 158-amino-acid chain: Small ribosomal subunit protein uS7 (158 aa).

It belongs to the universal ribosomal protein uS7 family. Part of the 30S ribosomal subunit. Contacts proteins S9 and S11.

Functionally, one of the primary rRNA binding proteins, it binds directly to 16S rRNA where it nucleates assembly of the head domain of the 30S subunit. Is located at the subunit interface close to the decoding center, probably blocks exit of the E-site tRNA. This is Small ribosomal subunit protein uS7 from Wolbachia pipientis subsp. Culex pipiens (strain wPip).